A 284-amino-acid chain; its full sequence is Nucleotide-binding protein Sbal223_0704 (284 aa).

8 to 15 (GRSGSGKS) serves as a coordination point for ATP. 56-59 (DVRN) lines the GTP pocket.

This sequence belongs to the RapZ-like family.

Functionally, displays ATPase and GTPase activities. This chain is Nucleotide-binding protein Sbal223_0704, found in Shewanella baltica (strain OS223).